The following is a 1941-amino-acid chain: Myosin-7B (1941 aa).

A Myosin N-terminal SH3-like domain is found at 30–80 (DGKKRVWVPDEQDAYVEAEVKTEATGGKVTVETKDQKVLTVRETEMQPMNP). Positions 84–785 (DLLEDMAMMT…LLGILEELRD (702 aa)) constitute a Myosin motor domain. 177–184 (GESGAGKT) contributes to the ATP binding site. Actin-binding stretches follow at residues 662 to 684 (LNKL…VPNE) and 764 to 778 (QFGH…GLLG). One can recognise an IQ domain in the interval 788-817 (LAKVLTLLQARSRGRLMRLEYQRMLGGRDA). The stretch at 846-1935 (LLRSAQAEEE…KLRARSRDAL (1090 aa)) forms a coiled coil. Residues 1887 to 1941 (RQFEEAEQQASTNLAKYRKAQHELDDAEERADMAETQANKLRARSRDALGPKHKE) form a disordered region. The segment covering 1930–1941 (RSRDALGPKHKE) has biased composition (basic and acidic residues).

This sequence belongs to the TRAFAC class myosin-kinesin ATPase superfamily. Myosin family. Muscle myosin is a hexameric protein that consists of 2 heavy chain subunits (MHC), 2 alkali light chain subunits (MLC) and 2 regulatory light chain subunits (MLC-2).

Its subcellular location is the membrane. Its function is as follows. Involved in muscle contraction. The sequence is that of Myosin-7B (Myh7b) from Mus musculus (Mouse).